Here is a 123-residue protein sequence, read N- to C-terminus: Holo-[acyl-carrier-protein] synthase (123 aa).

Residues aspartate 8 and glutamate 60 each coordinate Mg(2+).

It belongs to the P-Pant transferase superfamily. AcpS family. Requires Mg(2+) as cofactor.

The protein localises to the cytoplasm. The enzyme catalyses apo-[ACP] + CoA = holo-[ACP] + adenosine 3',5'-bisphosphate + H(+). Its function is as follows. Transfers the 4'-phosphopantetheine moiety from coenzyme A to a Ser of acyl-carrier-protein. This Wolbachia pipientis wMel protein is Holo-[acyl-carrier-protein] synthase.